A 207-amino-acid polypeptide reads, in one-letter code: dTTP/UTP pyrophosphatase (207 aa).

Asp-79 serves as the catalytic Proton acceptor.

Belongs to the Maf family. YhdE subfamily. A divalent metal cation is required as a cofactor.

It localises to the cytoplasm. The catalysed reaction is dTTP + H2O = dTMP + diphosphate + H(+). The enzyme catalyses UTP + H2O = UMP + diphosphate + H(+). Its function is as follows. Nucleoside triphosphate pyrophosphatase that hydrolyzes dTTP and UTP. May have a dual role in cell division arrest and in preventing the incorporation of modified nucleotides into cellular nucleic acids. The sequence is that of dTTP/UTP pyrophosphatase from Rhodopseudomonas palustris (strain BisB5).